We begin with the raw amino-acid sequence, 807 residues long: Glycerol-3-phosphate acyltransferase (807 aa).

The short motif at 308-313 (CHRSHM) is the HXXXXD motif element.

It belongs to the GPAT/DAPAT family.

The protein resides in the cell inner membrane. It catalyses the reaction sn-glycerol 3-phosphate + an acyl-CoA = a 1-acyl-sn-glycero-3-phosphate + CoA. Its pathway is phospholipid metabolism; CDP-diacylglycerol biosynthesis; CDP-diacylglycerol from sn-glycerol 3-phosphate: step 1/3. The polypeptide is Glycerol-3-phosphate acyltransferase (Shewanella woodyi (strain ATCC 51908 / MS32)).